Consider the following 113-residue polypeptide: uncharacterized protein (113 aa).

Its subcellular location is the mitochondrion. This is an uncharacterized protein from Arabidopsis thaliana (Mouse-ear cress).